Consider the following 681-residue polypeptide: Protein NirI (681 aa).

Positions 1–30 are cleaved as a signal peptide; that stretch reads MAMPGKSSHAPSRLLLALLTLILLALPARP. Helical transmembrane passes span 394-414, 436-456, 468-488, 535-555, and 568-588; these read IPGI…LFGQ, LVVL…VAFL, FLIE…LLFW, TLFV…LILA, and FLRA…GLFI.

This sequence to P.stutzeri NosR.

It is found in the cell membrane. The polypeptide is Protein NirI (nirI) (Paracoccus denitrificans (strain Pd 1222)).